Consider the following 256-residue polypeptide: GTP cyclohydrolase FolE2 (256 aa).

It belongs to the GTP cyclohydrolase IV family.

The enzyme catalyses GTP + H2O = 7,8-dihydroneopterin 3'-triphosphate + formate + H(+). The protein operates within cofactor biosynthesis; 7,8-dihydroneopterin triphosphate biosynthesis; 7,8-dihydroneopterin triphosphate from GTP: step 1/1. Its function is as follows. Converts GTP to 7,8-dihydroneopterin triphosphate. In Maridesulfovibrio salexigens (strain ATCC 14822 / DSM 2638 / NCIMB 8403 / VKM B-1763) (Desulfovibrio salexigens), this protein is GTP cyclohydrolase FolE2.